The primary structure comprises 139 residues: TDP-4-oxo-6-deoxy-alpha-D-glucose-3,4-oxoisomerase (139 aa).

Histidine 49 (proton acceptor) is an active-site residue.

As to quaternary structure, homodimer.

It carries out the reaction dTDP-4-dehydro-6-deoxy-alpha-D-glucose = dTDP-3-dehydro-6-deoxy-alpha-D-galactose. Functionally, mediates the isomerization of dTDP-6-deoxy-D-xylohex-4-ulose into dTDP-6-deoxy-D-xylohex-3-ulose in the biosynthesis of dTDP-3-acetamido-3,6-dideoxy-alpha-D-galactose, a glycan chain of the S-layer. The protein is TDP-4-oxo-6-deoxy-alpha-D-glucose-3,4-oxoisomerase (fdtA) of Aneurinibacillus thermoaerophilus.